Reading from the N-terminus, the 141-residue chain is Large ribosomal subunit protein uL11c (141 aa).

This sequence belongs to the universal ribosomal protein uL11 family. Part of the ribosomal stalk of the 50S ribosomal subunit. Interacts with L10 and the large rRNA to form the base of the stalk. L10 forms an elongated spine to which L12 dimers bind in a sequential fashion forming a multimeric L10(L12)X complex.

The protein localises to the plastid. It localises to the cyanelle. Its function is as follows. Forms part of the ribosomal stalk which helps the ribosome interact with GTP-bound translation factors. The sequence is that of Large ribosomal subunit protein uL11c from Cyanophora paradoxa.